The following is a 359-amino-acid chain: Fructose-bisphosphate aldolase (359 aa).

S50 is a binding site for D-glyceraldehyde 3-phosphate. The active-site Proton donor is D83. Zn(2+) contacts are provided by H84, D105, E142, and H198. G199 lines the dihydroxyacetone phosphate pocket. A Zn(2+)-binding site is contributed by H232. Dihydroxyacetone phosphate-binding positions include 233–235 and 275–278; these read GSS and NIDT.

The protein belongs to the class II fructose-bisphosphate aldolase family. As to quaternary structure, homodimer. Zn(2+) serves as cofactor.

It catalyses the reaction beta-D-fructose 1,6-bisphosphate = D-glyceraldehyde 3-phosphate + dihydroxyacetone phosphate. Its pathway is carbohydrate biosynthesis; Calvin cycle. It functions in the pathway carbohydrate degradation; glycolysis; D-glyceraldehyde 3-phosphate and glycerone phosphate from D-glucose: step 4/4. Functionally, catalyzes the aldol condensation of dihydroxyacetone phosphate (DHAP or glycerone-phosphate) with glyceraldehyde 3-phosphate (G3P) to form fructose 1,6-bisphosphate (FBP) in gluconeogenesis and the reverse reaction in glycolysis. The chain is Fructose-bisphosphate aldolase (cbbA) from Rhizobium meliloti (strain 1021) (Ensifer meliloti).